The chain runs to 503 residues: uncharacterized protein (503 aa).

A run of 12 helical transmembrane segments spans residues 20–40 (FIAFAFNYVAGFGFISVVLTM), 43–63 (LGPFSYLILGLAALGILGVML), 106–126 (VSLTGPFNGLIVPAVLVLSFA), 138–158 (LIGLLVGGFVLFGALNFISLF), 166–186 (AILFFAIVKWVVVLGGLILGI), 215–235 (VISTTVGMLVAFAGTEDLTAI), 249–269 (LLMFGAVTLLYLIGFVIISGI), 301–321 (YLGIPLLVIFGLGFLLNSLAS), 359–379 (VWASNIMTLAVMVLMIIVPFL), 405–425 (LAVLISLIQYFITYIFFFMIL), 443–463 (GVSFAIITVLLFVNLFPITAW), and 468–488 (TFKLSILAAFFALGIGFFIHS).

To M.genitalium MG225.

Its subcellular location is the cell membrane. This is an uncharacterized protein from Mycoplasma pneumoniae (strain ATCC 29342 / M129 / Subtype 1) (Mycoplasmoides pneumoniae).